Here is a 72-residue protein sequence, read N- to C-terminus: Translation initiation factor IF-1 (72 aa).

Residues 1–72 form the S1-like domain; the sequence is MAGNDVIEIE…TKGRITYRHK (72 aa).

This sequence belongs to the IF-1 family. Component of the 30S ribosomal translation pre-initiation complex which assembles on the 30S ribosome in the order IF-2 and IF-3, IF-1 and N-formylmethionyl-tRNA(fMet); mRNA recruitment can occur at any time during PIC assembly.

Its subcellular location is the cytoplasm. In terms of biological role, one of the essential components for the initiation of protein synthesis. Stabilizes the binding of IF-2 and IF-3 on the 30S subunit to which N-formylmethionyl-tRNA(fMet) subsequently binds. Helps modulate mRNA selection, yielding the 30S pre-initiation complex (PIC). Upon addition of the 50S ribosomal subunit IF-1, IF-2 and IF-3 are released leaving the mature 70S translation initiation complex. In Oenococcus oeni (strain ATCC BAA-331 / PSU-1), this protein is Translation initiation factor IF-1.